We begin with the raw amino-acid sequence, 363 residues long: Cysteine proteinase 15A (363 aa).

The N-terminal stretch at 1 to 18 is a signal peptide; sequence MDRRFLFALFLFAAVATA. A propeptide spans 19 to 131 (activation peptide); it reads VTDDTNNDDF…QKAPILPTTN (113 aa). Disulfide bonds link Cys-153–Cys-203 and Cys-187–Cys-236. Residue Cys-156 is part of the active site. Asn-249 carries an N-linked (GlcNAc...) asparagine glycan. An intrachain disulfide couples Cys-292 to Cys-347. Catalysis depends on residues His-299 and Asn-326.

This sequence belongs to the peptidase C1 family.

The chain is Cysteine proteinase 15A from Pisum sativum (Garden pea).